The sequence spans 384 residues: Queuine tRNA-ribosyltransferase (384 aa).

Asp-92 serves as the catalytic Proton acceptor. Substrate-binding positions include 92 to 96 (DSGGF), Asp-146, Gln-190, and Gly-217. The interval 248–254 (GVGRPED) is RNA binding. Asp-267 acts as the Nucleophile in catalysis. The interval 272–276 (TRHAR) is RNA binding; important for wobble base 34 recognition. The Zn(2+) site is built by Cys-305, Cys-307, Cys-310, and His-337.

This sequence belongs to the queuine tRNA-ribosyltransferase family. Homodimer. Within each dimer, one monomer is responsible for RNA recognition and catalysis, while the other monomer binds to the replacement base PreQ1. The cofactor is Zn(2+).

It catalyses the reaction 7-aminomethyl-7-carbaguanine + guanosine(34) in tRNA = 7-aminomethyl-7-carbaguanosine(34) in tRNA + guanine. Its pathway is tRNA modification; tRNA-queuosine biosynthesis. Its function is as follows. Catalyzes the base-exchange of a guanine (G) residue with the queuine precursor 7-aminomethyl-7-deazaguanine (PreQ1) at position 34 (anticodon wobble position) in tRNAs with GU(N) anticodons (tRNA-Asp, -Asn, -His and -Tyr). Catalysis occurs through a double-displacement mechanism. The nucleophile active site attacks the C1' of nucleotide 34 to detach the guanine base from the RNA, forming a covalent enzyme-RNA intermediate. The proton acceptor active site deprotonates the incoming PreQ1, allowing a nucleophilic attack on the C1' of the ribose to form the product. After dissociation, two additional enzymatic reactions on the tRNA convert PreQ1 to queuine (Q), resulting in the hypermodified nucleoside queuosine (7-(((4,5-cis-dihydroxy-2-cyclopenten-1-yl)amino)methyl)-7-deazaguanosine). This chain is Queuine tRNA-ribosyltransferase, found in Xylella fastidiosa (strain M12).